The sequence spans 283 residues: Elongation factor Ts (283 aa).

The segment at 79–82 (TDFV) is involved in Mg(2+) ion dislocation from EF-Tu.

It belongs to the EF-Ts family.

It localises to the cytoplasm. Its function is as follows. Associates with the EF-Tu.GDP complex and induces the exchange of GDP to GTP. It remains bound to the aminoacyl-tRNA.EF-Tu.GTP complex up to the GTP hydrolysis stage on the ribosome. The polypeptide is Elongation factor Ts (Shewanella oneidensis (strain ATCC 700550 / JCM 31522 / CIP 106686 / LMG 19005 / NCIMB 14063 / MR-1)).